The primary structure comprises 325 residues: Natural cytotoxicity triggering receptor 1 (325 aa).

An N-terminal signal peptide occupies residues 1–16; it reads MLPTLTALLCLGLCLS. Residues 17 to 258 lie on the Extracellular side of the membrane; sequence QRINTEKQTL…WDHTAQNLIR (242 aa). 2 consecutive Ig-like domains span residues 42-100 and 137-192; these read GNSV…TCFY and GENV…RCFG. Cysteines 49 and 98 form a disulfide. Residue asparagine 139 is glycosylated (N-linked (GlcNAc...) asparagine). Cysteine 144 and cysteine 190 are oxidised to a cystine. The N-linked (GlcNAc...) asparagine glycan is linked to asparagine 216. The chain crosses the membrane as a helical span at residues 259–279; the sequence is IGLACIIVMALVWLLAEDWLS. The Cytoplasmic portion of the chain corresponds to 280-325; it reads RRKDHEKLNRLTSWECRGRRRMHRYHEEEQRDAISMRELKATPGDM.

This sequence belongs to the natural cytotoxicity receptor (NCR) family. Interacts with CD3Z and FCER1G. As to expression, weakly expressed in spleen, heart and lung.

The protein resides in the cell membrane. Cytotoxicity-activating receptor that may contribute to the increased efficiency of activated natural killer (NK) cells to mediate tumor cell lysis. The chain is Natural cytotoxicity triggering receptor 1 (Ncr1) from Rattus norvegicus (Rat).